Here is a 245-residue protein sequence, read N- to C-terminus: Protein-L-isoaspartate O-methyltransferase 1 (245 aa).

S76 is a catalytic residue.

Belongs to the methyltransferase superfamily. L-isoaspartyl/D-aspartyl protein methyltransferase family.

The protein localises to the cytoplasm. It catalyses the reaction [protein]-L-isoaspartate + S-adenosyl-L-methionine = [protein]-L-isoaspartate alpha-methyl ester + S-adenosyl-L-homocysteine. Catalyzes the methyl esterification of L-isoaspartyl residues in peptides and proteins that result from spontaneous decomposition of normal L-aspartyl and L-asparaginyl residues. It plays a role in the repair and/or degradation of damaged proteins. The chain is Protein-L-isoaspartate O-methyltransferase 1 from Rhodopseudomonas palustris (strain HaA2).